The following is an 894-amino-acid chain: Phosphoenolpyruvate carboxylase (894 aa).

Residues histidine 143 and lysine 556 contribute to the active site.

This sequence belongs to the PEPCase type 1 family. Requires Mg(2+) as cofactor.

The enzyme catalyses oxaloacetate + phosphate = phosphoenolpyruvate + hydrogencarbonate. Its function is as follows. Forms oxaloacetate, a four-carbon dicarboxylic acid source for the tricarboxylic acid cycle. The chain is Phosphoenolpyruvate carboxylase from Acinetobacter baumannii (strain ATCC 17978 / DSM 105126 / CIP 53.77 / LMG 1025 / NCDC KC755 / 5377).